The sequence spans 449 residues: UDP-N-acetylmuramoylalanine--D-glutamate ligase (449 aa).

118-124 contacts ATP; the sequence is GSNGKTT.

The protein belongs to the MurCDEF family.

Its subcellular location is the cytoplasm. It catalyses the reaction UDP-N-acetyl-alpha-D-muramoyl-L-alanine + D-glutamate + ATP = UDP-N-acetyl-alpha-D-muramoyl-L-alanyl-D-glutamate + ADP + phosphate + H(+). The protein operates within cell wall biogenesis; peptidoglycan biosynthesis. Functionally, cell wall formation. Catalyzes the addition of glutamate to the nucleotide precursor UDP-N-acetylmuramoyl-L-alanine (UMA). The polypeptide is UDP-N-acetylmuramoylalanine--D-glutamate ligase (Leuconostoc mesenteroides subsp. mesenteroides (strain ATCC 8293 / DSM 20343 / BCRC 11652 / CCM 1803 / JCM 6124 / NCDO 523 / NBRC 100496 / NCIMB 8023 / NCTC 12954 / NRRL B-1118 / 37Y)).